Here is a 396-residue protein sequence, read N- to C-terminus: Tryptophan synthase beta chain (396 aa).

The residue at position 90 (Lys90) is an N6-(pyridoxal phosphate)lysine.

This sequence belongs to the TrpB family. As to quaternary structure, tetramer of two alpha and two beta chains. It depends on pyridoxal 5'-phosphate as a cofactor.

The enzyme catalyses (1S,2R)-1-C-(indol-3-yl)glycerol 3-phosphate + L-serine = D-glyceraldehyde 3-phosphate + L-tryptophan + H2O. It functions in the pathway amino-acid biosynthesis; L-tryptophan biosynthesis; L-tryptophan from chorismate: step 5/5. In terms of biological role, the beta subunit is responsible for the synthesis of L-tryptophan from indole and L-serine. The chain is Tryptophan synthase beta chain from Clostridium kluyveri (strain NBRC 12016).